The chain runs to 280 residues: Shikimate kinase (280 aa).

86-96 lines the ATP pocket; sequence PPGVGLKGSAA.

It belongs to the GHMP kinase family. Archaeal shikimate kinase subfamily.

Its subcellular location is the cytoplasm. It carries out the reaction shikimate + ATP = 3-phosphoshikimate + ADP + H(+). It participates in metabolic intermediate biosynthesis; chorismate biosynthesis; chorismate from D-erythrose 4-phosphate and phosphoenolpyruvate: step 5/7. The polypeptide is Shikimate kinase (aroK) (Aeropyrum pernix (strain ATCC 700893 / DSM 11879 / JCM 9820 / NBRC 100138 / K1)).